Consider the following 254-residue polypeptide: Large ribosomal subunit protein uL2 (254 aa).

The protein belongs to the universal ribosomal protein uL2 family. Component of the large ribosomal subunit. Mature ribosomes consist of a small (40S) and a large (60S) subunit. The 40S subunit contains about 32 different proteins and 1 molecule of RNA (18S). The 60S subunit contains 45 different proteins and 3 molecules of RNA (25S, 5.8S and 5S).

It is found in the cytoplasm. In terms of biological role, component of the ribosome, a large ribonucleoprotein complex responsible for the synthesis of proteins in the cell. The small ribosomal subunit (SSU) binds messenger RNAs (mRNAs) and translates the encoded message by selecting cognate aminoacyl-transfer RNA (tRNA) molecules. The large subunit (LSU) contains the ribosomal catalytic site termed the peptidyl transferase center (PTC), which catalyzes the formation of peptide bonds, thereby polymerizing the amino acids delivered by tRNAs into a polypeptide chain. The nascent polypeptides leave the ribosome through a tunnel in the LSU and interact with protein factors that function in enzymatic processing, targeting, and the membrane insertion of nascent chains at the exit of the ribosomal tunnel. In Candida albicans (strain SC5314 / ATCC MYA-2876) (Yeast), this protein is Large ribosomal subunit protein uL2.